Reading from the N-terminus, the 103-residue chain is Seminal ribonuclease (103 aa).

4 cysteine pairs are disulfide-bonded: cysteine 12-cysteine 70, cysteine 26-cysteine 81, cysteine 44-cysteine 96, and cysteine 51-cysteine 58. Substrate contacts are provided by residues 27–31 (KLVNT), lysine 52, and arginine 71.

This sequence belongs to the pancreatic ribonuclease family. In terms of assembly, homodimer; disulfide-linked.

Its subcellular location is the secreted. It catalyses the reaction an [RNA] containing cytidine + H2O = an [RNA]-3'-cytidine-3'-phosphate + a 5'-hydroxy-ribonucleotide-3'-[RNA].. The enzyme catalyses an [RNA] containing uridine + H2O = an [RNA]-3'-uridine-3'-phosphate + a 5'-hydroxy-ribonucleotide-3'-[RNA].. This enzyme hydrolyzes both single- and double-stranded RNA. In Cephalophus silvicultor (Yellow-backed duiker), this protein is Seminal ribonuclease (SRN).